A 389-amino-acid polypeptide reads, in one-letter code: ATP-dependent (S)-NAD(P)H-hydrate dehydratase (389 aa).

One can recognise a YjeF C-terminal domain in the interval 53-389 (TLQLVRNIIP…RGGGRLPQAL (337 aa)). Tyrosine 85 carries the phosphotyrosine modification. (6S)-NADPHX-binding positions include glutamate 153 and 205–211 (NHMEFSR). Residues 245–249 (KGERD) and 264–273 (GSSRRCGGQG) contribute to the ATP site. Aspartate 274 contributes to the (6S)-NADPHX binding site. 2 disordered regions span residues 316–350 (KTRA…PGGC) and 369–389 (RSLH…PQAL).

Belongs to the NnrD/CARKD family. It depends on Mg(2+) as a cofactor.

It is found in the mitochondrion. It carries out the reaction (6S)-NADHX + ATP = ADP + phosphate + NADH + H(+). The catalysed reaction is (6S)-NADPHX + ATP = ADP + phosphate + NADPH + H(+). Functionally, catalyzes the dehydration of the S-form of NAD(P)HX at the expense of ATP, which is converted to ADP. Together with NAD(P)HX epimerase, which catalyzes the epimerization of the S- and R-forms, the enzyme allows the repair of both epimers of NAD(P)HX, a damaged form of NAD(P)H that is a result of enzymatic or heat-dependent hydration. The sequence is that of ATP-dependent (S)-NAD(P)H-hydrate dehydratase from Macaca mulatta (Rhesus macaque).